A 489-amino-acid polypeptide reads, in one-letter code: Inositol-pentakisphosphate 2-kinase (489 aa).

An EXKPK motif motif is present at residues 136-140 (EIKPK).

The protein belongs to the IPK1 type 2 family. In brain, it is expressed throughout the hippocampus (CA1, CA2, CA3 and dentate gyrus), inner layers of the cerebral cortex, and Purkinje cells of the cerebellum. In heart, it is expressed in cardiomyocytes but not in interstitial cells, blood vessels, or valves. Also expressed in testis.

Its subcellular location is the cytoplasm. It localises to the nucleus. The catalysed reaction is 1D-myo-inositol 1,3,4,5,6-pentakisphosphate + ATP = 1D-myo-inositol hexakisphosphate + ADP + H(+). Its function is as follows. Phosphorylates Ins(1,3,4,5,6)P5 at position 2 to form Ins(1,2,3,4,5,6)P6 (InsP6 or phytate). InsP6 is involved in many processes such as mRNA export, non-homologous end-joining, endocytosis, ion channel regulation. It also protects cells from TNF-alpha-induced apoptosis. The chain is Inositol-pentakisphosphate 2-kinase (Ippk) from Mus musculus (Mouse).